A 503-amino-acid polypeptide reads, in one-letter code: uncharacterized protein (503 aa).

2 disordered regions span residues 1–26 (MADDEDDIVWIREDTAQSSVPTSPTT) and 132–156 (DQQQNDQLSAKLDPKTPNSVDDNSM). Positions 16–26 (AQSSVPTSPTT) are enriched in low complexity. Positions 147–156 (TPNSVDDNSM) are enriched in polar residues.

This is an uncharacterized protein from Caenorhabditis elegans.